Reading from the N-terminus, the 141-residue chain is VLSPEDKNHVRSTWDKIGGHGAEYGAEALERMFTSFPTTKTYFPHFDVSHGSAQVKAHGKKVADALANAAGHLDDLPGALSALSDLHAHKLRVDPVNFKLLSHCLLVTLANHHPAEFTPGVHASLDKFLASVSTVLTSKYR.

The Globin domain occupies 1–141; the sequence is VLSPEDKNHV…VSTVLTSKYR (141 aa). Ser3 carries the phosphoserine modification. Lys7 carries the post-translational modification N6-succinyllysine. Lys16 is modified (N6-acetyllysine; alternate). Lys16 is modified (N6-succinyllysine; alternate). Position 24 is a phosphotyrosine (Tyr24). Position 35 is a phosphoserine (Ser35). Position 40 is an N6-succinyllysine (Lys40). Phosphoserine is present on Ser49. His58 contacts O2. Position 87 (His87) interacts with heme b. The residue at position 102 (Ser102) is a Phosphoserine. Thr108 carries the post-translational modification Phosphothreonine. Residues Ser124 and Ser131 each carry the phosphoserine modification. Thr134 and Thr137 each carry phosphothreonine. Ser138 bears the Phosphoserine mark.

Belongs to the globin family. Heterotetramer of two alpha chains and two beta chains. In terms of tissue distribution, red blood cells.

Its function is as follows. Involved in oxygen transport from the lung to the various peripheral tissues. In terms of biological role, hemopressin acts as an antagonist peptide of the cannabinoid receptor CNR1. Hemopressin-binding efficiently blocks cannabinoid receptor CNR1 and subsequent signaling. This chain is Hemoglobin subunit alpha (HBA), found in Spalax ehrenbergi (Middle East blind mole rat).